We begin with the raw amino-acid sequence, 506 residues long: uncharacterized protein (506 aa).

The protein to R.prowazekii RP789, RP027 and RP028.

This is an uncharacterized protein from Synechocystis sp. (strain ATCC 27184 / PCC 6803 / Kazusa).